Reading from the N-terminus, the 380-residue chain is Alpha-N-acetylneuraminate alpha-2,8-sialyltransferase ST8SIA3 (380 aa).

Topologically, residues 1 to 9 are cytoplasmic; it reads MRNCKMARV. The chain crosses the membrane as a helical; Signal-anchor for type II membrane protein span at residues 10–33; sequence ASVLGLVMLSVALLILSLISYVSL. Residues 34 to 380 are Lumenal-facing; sequence KKENIFTTPK…LTKLTLSHCA (347 aa). N-linked (GlcNAc...) asparagine glycans are attached at residues Asn-93, Asn-113, and Asn-160. Cystine bridges form between Cys-162–Cys-313 and Cys-176–Cys-379. CMP-N-acetyl-beta-neuraminate is bound by residues Asn-167 and Asn-190. N-linked (GlcNAc...) asparagine glycosylation occurs at Asn-206. Ser-300, Thr-301, Gly-302, Trp-322, Tyr-336, and His-337 together coordinate CMP-N-acetyl-beta-neuraminate. His-354 (proton donor/acceptor) is an active-site residue.

Belongs to the glycosyltransferase 29 family. Homodimer. Post-translationally, autopolysialylated. In terms of tissue distribution, expressed in fetal and adult brain and fetal liver.

The protein resides in the golgi apparatus membrane. The catalysed reaction is [N-acetyl-alpha-D-neuraminosyl-(2-&gt;8)](n) + CMP-N-acetyl-beta-neuraminate = [N-acetyl-alpha-D-neuraminosyl-(2-&gt;8)](n+1) + CMP + H(+). It catalyses the reaction alpha-Neu5Ac-(2-&gt;3)-beta-D-Gal-(1-&gt;4)-6S-D-GlcNAc + CMP-N-acetyl-beta-neuraminate = alpha-Neu5Ac-(2-&gt;8)-alpha-Neu5Ac-(2-&gt;3)-beta-D-Gal-(1-&gt;4)-6S-D-GlcNAc + CMP + H(+). It carries out the reaction a ganglioside GM3 (d18:1(4E)) + CMP-N-acetyl-beta-neuraminate = a ganglioside GD3 (d18:1(4E)) + CMP + H(+). The enzyme catalyses a ganglioside GM3 + CMP-N-acetyl-beta-neuraminate = a ganglioside GD3 + CMP + H(+). The catalysed reaction is an N-acetyl-alpha-neuraminyl-(2-&gt;3)-beta-D-galactosyl derivative + CMP-N-acetyl-beta-neuraminate = an N-acetyl-alpha-neuraminyl-(2-&gt;8)-N-acetyl-alpha-neuraminyl-(2-&gt;3)-beta-D-galactosyl derivative + CMP + H(+). It catalyses the reaction an N-acetyl-alpha-neuraminyl-(2-&gt;3)-beta-D-galactosyl-(1-&gt;4)-N-acetyl-beta-D-glucosaminyl derivative + CMP-N-acetyl-beta-neuraminate = an alpha-Neu5Ac-(2-&gt;8)-alpha-Neu5Ac-(2-&gt;3)-beta-D-Gal-(1-&gt;4)-beta-D-GlcNAc derivative + CMP + H(+). It participates in protein modification; protein glycosylation. Its function is as follows. Catalyzes the transfer of sialic acid from a CMP-linked sialic acid donor onto a terminal alpha-2,3-, alpha-2,6-, or alpha-2,8-linked sialic acid of an acceptor, such as N-linked oligosaccharides of glycoproteins and glycolipids through alpha-2,8-linkages. Forms oligosialic and polysialic acid on various sialylated N-acetyllactosamine oligosaccharides of glycoproteins, including FETUB N-glycans, a2-HS-glycoprotein (AHSG) and alpha 2,3-sialylated glycosphingolipids, such as alpha 2,3-sialylparagloboside and ganglioside GM3 and to a lesser extent NCAM1 N-glycans. However, it is much more specific to N-linked oligosaccharides of glycoproteins than glycosphingolipids. 2,3-sialylparagloboside serves as the best acceptor substrate among the glycolipids. alpha-Neu5Ac-(2-&gt;8)-alpha-Neu5Ac-(2-&gt;3)-beta-D-Gal-(1-&gt;4)-6S-D-GlcNAc and monosialyl and disialyl N-acetyllactosamines are the best acceptor substrates among glycoproteins. May plays critical role in the striatum by mediating the formation of disialylated and trisialylated terminal glycotopes on N- and O-glycans of specific striatal proteins, regulating their distribution in lipid rafts, affecting their interaction with other binding partners, and subsequently modulating striatal functions. The polypeptide is Alpha-N-acetylneuraminate alpha-2,8-sialyltransferase ST8SIA3 (Homo sapiens (Human)).